The primary structure comprises 642 residues: Chaperone protein DnaK (642 aa).

Phosphothreonine; by autocatalysis is present on Thr196. Residues 593–603 (STMYQTPSGDT) show a composition bias toward polar residues. Positions 593-642 (STMYQTPSGDTPPSEPETGASEESKGGDKTQGDGEVDAEYEVIDGNDKDK) are disordered. The segment covering 614 to 624 (EESKGGDKTQG) has biased composition (basic and acidic residues). A compositionally biased stretch (acidic residues) spans 626-636 (GEVDAEYEVID).

It belongs to the heat shock protein 70 family.

In terms of biological role, acts as a chaperone. This Chlorobium phaeobacteroides (strain BS1) protein is Chaperone protein DnaK.